Reading from the N-terminus, the 387-residue chain is MDLFEYQAKELFAKHNVPTTPGRVTDTAEGARAIATEIGHPVMVKAQVKIGGRGKAGGVKYAATPDDAYEHANNILGLDIKGHVVKKLLVAEASDIAEEYYISFLLDRANRTYLAMCSVEGGMEIEEVAATKPDRLAKVPVDAAKGVDLAFARSIAEQGHLPAEVLDAAAVTISKLWDLFVGEDATLVEVNPLVRTPDDQILALDGKVTLDANADFRHPDHVEFEDRAATDPLELKAKEHDLNYVKLDGQVGIIGNGAGLVMSTLDVVAYAGEKHGGVKPANFLDIGGGASAEVMAAGLDVVLGDSQVKSVFVNVFGGITSCDAVATGIVKALEILGAEANKPLVVRLDGNNVEEGRRILTDANHPLVTLVPTMDEAADKAAELASA.

Residues 9 to 236 (KELFAKHNVP…RAATDPLELK (228 aa)) form the ATP-grasp domain. Residues Lys-45, 52–54 (GRG), Ser-94, and Glu-99 each bind ATP. Mg(2+)-binding residues include Asn-191 and Asp-205. Substrate is bound by residues Asn-256 and 318–320 (GIT).

Belongs to the succinate/malate CoA ligase beta subunit family. As to quaternary structure, heterotetramer of two alpha and two beta subunits. Requires Mg(2+) as cofactor.

It carries out the reaction succinate + ATP + CoA = succinyl-CoA + ADP + phosphate. It catalyses the reaction GTP + succinate + CoA = succinyl-CoA + GDP + phosphate. It functions in the pathway carbohydrate metabolism; tricarboxylic acid cycle; succinate from succinyl-CoA (ligase route): step 1/1. Its function is as follows. Succinyl-CoA synthetase functions in the citric acid cycle (TCA), coupling the hydrolysis of succinyl-CoA to the synthesis of either ATP or GTP and thus represents the only step of substrate-level phosphorylation in the TCA. The beta subunit provides nucleotide specificity of the enzyme and binds the substrate succinate, while the binding sites for coenzyme A and phosphate are found in the alpha subunit. The polypeptide is Succinate--CoA ligase [ADP-forming] subunit beta (Mycobacterium marinum (strain ATCC BAA-535 / M)).